We begin with the raw amino-acid sequence, 318 residues long: Glycine--tRNA ligase alpha subunit (318 aa).

Belongs to the class-II aminoacyl-tRNA synthetase family. As to quaternary structure, tetramer of two alpha and two beta subunits.

It localises to the cytoplasm. The enzyme catalyses tRNA(Gly) + glycine + ATP = glycyl-tRNA(Gly) + AMP + diphosphate. The chain is Glycine--tRNA ligase alpha subunit (glyQ) from Moraxella catarrhalis (Branhamella catarrhalis).